A 56-amino-acid chain; its full sequence is Large ribosomal subunit protein bL32 (56 aa).

The protein belongs to the bacterial ribosomal protein bL32 family.

This chain is Large ribosomal subunit protein bL32, found in Bacillus cereus (strain ATCC 14579 / DSM 31 / CCUG 7414 / JCM 2152 / NBRC 15305 / NCIMB 9373 / NCTC 2599 / NRRL B-3711).